We begin with the raw amino-acid sequence, 224 residues long: LRP chaperone MESD (224 aa).

The signal sequence occupies residues methionine 1–alanine 29. Positions methionine 1–glycine 155 are chaperone domain. Disordered regions lie at residues tyrosine 28–tyrosine 49 and glycine 178–leucine 224. An escort domain region spans residues serine 156–lysine 195. Residues glycine 187 to leucine 224 are compositionally biased toward basic and acidic residues. Residue asparagine 192 is glycosylated (N-linked (GlcNAc...) asparagine). The short motif at arginine 221–leucine 224 is the Prevents secretion from ER element.

Belongs to the MESD family. As to quaternary structure, monomer. Interacts with LRP5; the interaction prevents LRP5 from forming aggregates and chaperones LRP6 to the plasma membrane. Interacts with LRP6; the interaction prevents LRP6 from forming aggregates and chaperones LRP6 to the plasma membrane. Interacts with LRP4; the interaction promotes glycosylation of LRP4 and its cell-surface expression. Expressed in many tissues, but not in skeletal muscles. In the retina expressed in retinal ganglion cells, inner and outer plexiform layers, photoreceptor inner and outer segments and retinal pigment epithelium (at protein level).

The protein resides in the endoplasmic reticulum. Functionally, chaperone specifically assisting the folding of beta-propeller/EGF modules within the family of low-density lipoprotein receptors (LDLRs). Acts as a modulator of the Wnt pathway through chaperoning the coreceptors of the canonical Wnt pathway, LRP5 and LRP6, to the plasma membrane. Essential for specification of embryonic polarity and mesoderm induction. Plays an essential role in neuromuscular junction (NMJ) formation by promoting cell-surface expression of LRP4. May regulate phagocytosis of apoptotic retinal pigment epithelium (RPE) cells. In Mus musculus (Mouse), this protein is LRP chaperone MESD.